The following is a 351-amino-acid chain: Quinolinate phosphoribosyltransferase [decarboxylating] 2a, mitochondrial (351 aa).

Substrate contacts are provided by residues Arg-142, 173-175 (TRK), Arg-197, Lys-207, Glu-240, Asp-267, 299-301 (SGN), and 320-322 (SGA).

Belongs to the NadC/ModD family. Expressed in roots and flowers.

It localises to the mitochondrion. It catalyses the reaction nicotinate beta-D-ribonucleotide + CO2 + diphosphate = quinolinate + 5-phospho-alpha-D-ribose 1-diphosphate + 2 H(+). It functions in the pathway alkaloid biosynthesis; nicotine biosynthesis. Its pathway is cofactor biosynthesis; NAD(+) biosynthesis; nicotinate D-ribonucleotide from quinolinate: step 1/1. In terms of biological role, involved in the biosynthesis of pyridine alkaloid natural products, leading mainly to the production of anabasine, anatabine, nicotine and nornicotine, effective deterrents against herbivores with antiparasitic and pesticide properties (neurotoxins); nornicotine serves as the precursor in the synthesis of the carcinogen compound N'-nitrosonornicotine (NNN). Involved in the catabolism of quinolinic acid (QA). The sequence is that of Quinolinate phosphoribosyltransferase [decarboxylating] 2a, mitochondrial from Nicotiana tabacum (Common tobacco).